The sequence spans 295 residues: Indole-3-glycerol phosphate synthase (295 aa).

Belongs to the TrpC family.

The catalysed reaction is 1-(2-carboxyphenylamino)-1-deoxy-D-ribulose 5-phosphate + H(+) = (1S,2R)-1-C-(indol-3-yl)glycerol 3-phosphate + CO2 + H2O. It functions in the pathway amino-acid biosynthesis; L-tryptophan biosynthesis; L-tryptophan from chorismate: step 4/5. The chain is Indole-3-glycerol phosphate synthase from Prochlorococcus marinus (strain MIT 9215).